Here is a 478-residue protein sequence, read N- to C-terminus: Zinc finger C3HC-type protein 1-like (478 aa).

The C3HC-type zinc-finger motif lies at 93–147 (CAKYGWSNIECDMLKCSSCNAYLCASLQPVLDFSKYKQRCVELQEALRKAHEKFC). The interval 285–389 (LSAPNTPVSP…SSSSDTSPRG (105 aa)) is disordered. Residues 351-363 (SMGQGESSGLSNE) show a composition bias toward polar residues. The span at 377–388 (LCSSSSSDTSPR) shows a compositional bias: low complexity.

Phosphorylated. May also be weakly phosphorylated on Tyr residues.

It localises to the nucleus. It is found in the nucleus envelope. Its function is as follows. Required for proper positioning of a substantial amount of TPR at the nuclear basket (NB) through interaction with TPR. The polypeptide is Zinc finger C3HC-type protein 1-like (zc3hc1) (Xenopus tropicalis (Western clawed frog)).